The following is a 584-amino-acid chain: MTISDHPETEPKWWKEATIYQIYPASFKDSNNDGWGDLKGITSKLQYIKDLGVDAIWVCPFYDSPQQDMGYDISNYEKVWPTYGTNEDCFELIDKTHKLGMKFITDLVINHCSTEHEWFKESRSSKTNPKRDWFFWRPPKGYDAEGKPIPPNNWKSFFGGSAWTFDETTNEFYLRLFASRQVDLNWENEDCRRAIFESAVGFWLDHGVDGFRIDTAGLYSKRPGLPDSPIFDKTSKLQHPNWGSHNGPRIHEYHQELHRFMKNRVKDGREIMTVGEVAHGSDNALYTSAARYEVSEVFSFTHVEVGTSPFFRYNIVPFTLKQWKEAIASNFLFINGTDSWATTYIENHDQARSITRFADDSPKYRKISGKLLTLLECSLTGTLYVYQGQEIGQINFKEWPIEKYEDVDVKNNYEIIKKSFGKNSKEMKDFFKGIALLSRDHSRTPMPWTKDKPNAGFTGPDVKPWFLLNESFEQGINVEQESRDDDSVLNFWKRALQARKKYKELMIYGYDFQFIDLDSDQIFSFTKEYEDKTLFAALNFSGEEIEFSLPREGASLSFILGNYDDTDVSSRVLKPWEGRIYLVK.

Catalysis depends on Asp214, which acts as the Nucleophile. Glu276 acts as the Proton donor in catalysis.

This sequence belongs to the glycosyl hydrolase 13 family.

It catalyses the reaction Hydrolysis of terminal, non-reducing (1-&gt;4)-linked alpha-D-glucose residues with release of alpha-D-glucose.. The protein is Alpha-glucosidase MAL12 (MAL12) of Saccharomyces cerevisiae (strain ATCC 204508 / S288c) (Baker's yeast).